The primary structure comprises 509 residues: MDIRAAEISAILKDQIKNFGKEAEVSEVGQVLSVGDGIARVYGLDNVQAGEMVEFPGGIRGMALNLESDNVGVVIFGSDRDIKEGDTVKRTGAIVDVPVGPELLGRVVDALGNPIDGKGPINATRRSRVDVKAPGIIPRKSVHEPMSTGLKAIDALIPVGRGQRELVIGDRQTGKTAILLDAFLNQKAIHDNGPEGEKLYCVYVAVGQKRSTVAQFVKVLEERGALKYSIIIAATASDPAPMQFLAPFAGCAMGEYFRDNGMHALIGYDDLSKQAVSYRQMSLLLRRPPGREAYPGDVFYLHSRLLERAAKMNDDKGAGSLTALPVIETQGNDVSAFIPTNVISITDGQIFLETDLFYQGIRPAVNVGLSVSRVGSSAQIKAMKQVAGSIKGELAQYREMAAFAQFGSDLDAATQRLLNRGARLTELLKQPQFSPLKTEEQVAVIFAGVNGYLDKLPVAQVGKFEQGLLSYLRSEGSAILDAIRTEKAISDDTKGKLTAALDSFAKSFQ.

169–176 (GDRQTGKT) provides a ligand contact to ATP.

It belongs to the ATPase alpha/beta chains family. In terms of assembly, F-type ATPases have 2 components, CF(1) - the catalytic core - and CF(0) - the membrane proton channel. CF(1) has five subunits: alpha(3), beta(3), gamma(1), delta(1), epsilon(1). CF(0) has three main subunits: a(1), b(2) and c(9-12). The alpha and beta chains form an alternating ring which encloses part of the gamma chain. CF(1) is attached to CF(0) by a central stalk formed by the gamma and epsilon chains, while a peripheral stalk is formed by the delta and b chains.

Its subcellular location is the cell inner membrane. The enzyme catalyses ATP + H2O + 4 H(+)(in) = ADP + phosphate + 5 H(+)(out). Produces ATP from ADP in the presence of a proton gradient across the membrane. The alpha chain is a regulatory subunit. In Rhizobium etli (strain ATCC 51251 / DSM 11541 / JCM 21823 / NBRC 15573 / CFN 42), this protein is ATP synthase subunit alpha.